Reading from the N-terminus, the 492-residue chain is Katanin p60 ATPase-containing subunit A1 (492 aa).

Residues P91–K158 form a disordered region. Residues L138 to V147 are compositionally biased toward polar residues. G250–T257 serves as a coordination point for ATP.

This sequence belongs to the AAA ATPase family. Katanin p60 subunit A1 subfamily. As to quaternary structure, can homooligomerize into hexameric rings, which may be promoted by interaction with microtubules. Interacts with katnb1, which may serve as a targeting subunit.

Its subcellular location is the cytoplasm. The protein localises to the cytoskeleton. It is found in the microtubule organizing center. The protein resides in the centrosome. It localises to the spindle pole. Its subcellular location is the spindle. The catalysed reaction is n ATP + n H2O + a microtubule = n ADP + n phosphate + (n+1) alpha/beta tubulin heterodimers.. ATPase activity is stimulated by microtubules, which promote homooligomerization. ATP-dependent microtubule severing is stimulated by interaction with katnb1. In terms of biological role, catalytic subunit of a complex which severs microtubules in an ATP-dependent manner. Microtubule severing may promote rapid reorganization of cellular microtubule arrays and the release of microtubules from the centrosome following nucleation. This is Katanin p60 ATPase-containing subunit A1 (katna1) from Xenopus tropicalis (Western clawed frog).